The primary structure comprises 368 residues: Probable endopolygalacturonase A (368 aa).

Positions 1-18 are cleaved as a signal peptide; it reads MRSVELLSLAALGSLVAA. Positions 19–31 are excised as a propeptide; it reads APAPSRVSDLTKR. The cysteines at positions 35 and 50 are disulfide-linked. PbH1 repeat units follow at residues 140–162, 167–192, 193–214, 215–235, 244–265, 273–295, and 307–352; these read LEDS…SVQA, LIDI…DISE, STGV…AINS, GENI…SIGS, VKNV…RIKT, VSEV…VIEQ, and TTGV…DITG. Asp-207 (proton donor) is an active-site residue. Cysteines 209 and 225 form a disulfide. His-229 is a catalytic residue. Asn-246 carries N-linked (GlcNAc...) asparagine glycosylation. Disulfide bonds link Cys-335–Cys-340 and Cys-359–Cys-368.

It belongs to the glycosyl hydrolase 28 family.

It localises to the secreted. It catalyses the reaction (1,4-alpha-D-galacturonosyl)n+m + H2O = (1,4-alpha-D-galacturonosyl)n + (1,4-alpha-D-galacturonosyl)m.. In terms of biological role, involved in maceration and soft-rotting of plant tissue. Hydrolyzes the 1,4-alpha glycosidic bonds of de-esterified pectate in the smooth region of the plant cell wall. This Neosartorya fischeri (strain ATCC 1020 / DSM 3700 / CBS 544.65 / FGSC A1164 / JCM 1740 / NRRL 181 / WB 181) (Aspergillus fischerianus) protein is Probable endopolygalacturonase A (pgaA).